The sequence spans 466 residues: Glutamate--tRNA ligase 1 (466 aa).

Positions 9–19 (PSPTGLLHIGN) match the 'HIGH' region motif. The 'KMSKS' region signature appears at 238-242 (KLSKR). Lys-241 serves as a coordination point for ATP.

This sequence belongs to the class-I aminoacyl-tRNA synthetase family. Glutamate--tRNA ligase type 1 subfamily. As to quaternary structure, monomer.

The protein localises to the cytoplasm. The catalysed reaction is tRNA(Glu) + L-glutamate + ATP = L-glutamyl-tRNA(Glu) + AMP + diphosphate. In terms of biological role, catalyzes the attachment of glutamate to tRNA(Glu) in a two-step reaction: glutamate is first activated by ATP to form Glu-AMP and then transferred to the acceptor end of tRNA(Glu). In Gluconacetobacter diazotrophicus (strain ATCC 49037 / DSM 5601 / CCUG 37298 / CIP 103539 / LMG 7603 / PAl5), this protein is Glutamate--tRNA ligase 1.